Consider the following 141-residue polypeptide: MAIILGADAHGNELKEVLKSFLQQEGFDVTDVTDIDKDFIDNTLAVAQAVNDKDTNLGIMVDAYGAGPFMVATKLKGMIAAEVSDERSAYMTRGHNNARMITLGARIVGEELAKNIAKAFVVGSYDGGRHQIRVDMLNKMA.

This sequence belongs to the LacAB/RpiB family. In terms of assembly, heteromultimeric protein consisting of LacA and LacB.

It carries out the reaction aldehydo-D-galactose 6-phosphate = keto-D-tagatose 6-phosphate. It participates in carbohydrate metabolism; D-galactose 6-phosphate degradation; D-tagatose 6-phosphate from D-galactose 6-phosphate: step 1/1. The sequence is that of Galactose-6-phosphate isomerase subunit LacA from Streptococcus equi subsp. zooepidemicus (strain MGCS10565).